A 317-amino-acid polypeptide reads, in one-letter code: uncharacterized protein (317 aa).

The span at 1–11 shows a compositional bias: basic and acidic residues; that stretch reads MASAGAERRPG. The interval 1–164 is disordered; that stretch reads MASAGAERRP…KAKKRKSLGA (164 aa). Polar residues predominate over residues 19 to 34; the sequence is GQGQLTEEPGSAQTSE. Basic and acidic residues-rich tracts occupy residues 47–58 and 71–92; these read HEARGTQSEDQR and EGPKLGEERPKPHAGALEERGP. 2 stretches are compositionally biased toward basic residues: residues 100–110 and 151–161; these read RPRHGPKRKPV and KQHKKAKKRKS.

This is an uncharacterized protein from Homo sapiens (Human).